Reading from the N-terminus, the 106-residue chain is UPF0145 protein SCO3412 (106 aa).

Belongs to the UPF0145 family.

The sequence is that of UPF0145 protein SCO3412 from Streptomyces coelicolor (strain ATCC BAA-471 / A3(2) / M145).